The chain runs to 198 residues: NAD(P)H dehydrogenase (quinone) (198 aa).

Residues 4 to 189 form the Flavodoxin-like domain; sequence ILVLYYSMYG…SIARYQGEYV (186 aa). FMN-binding positions include 10 to 15 and 78 to 80; these read SMYGHI and TRF. Tyrosine 12 is a binding site for NAD(+). Tryptophan 98 is a binding site for substrate. FMN-binding positions include 113-118 and histidine 133; that span reads STGTGG.

This sequence belongs to the WrbA family. FMN serves as cofactor.

The catalysed reaction is a quinone + NADH + H(+) = a quinol + NAD(+). The enzyme catalyses a quinone + NADPH + H(+) = a quinol + NADP(+). The sequence is that of NAD(P)H dehydrogenase (quinone) from Salmonella paratyphi A (strain ATCC 9150 / SARB42).